A 272-amino-acid polypeptide reads, in one-letter code: Ribosomal RNA small subunit methyltransferase A (272 aa).

S-adenosyl-L-methionine contacts are provided by asparagine 18, leucine 20, glycine 45, glutamate 66, aspartate 91, and asparagine 113.

Belongs to the class I-like SAM-binding methyltransferase superfamily. rRNA adenine N(6)-methyltransferase family. RsmA subfamily.

It is found in the cytoplasm. It carries out the reaction adenosine(1518)/adenosine(1519) in 16S rRNA + 4 S-adenosyl-L-methionine = N(6)-dimethyladenosine(1518)/N(6)-dimethyladenosine(1519) in 16S rRNA + 4 S-adenosyl-L-homocysteine + 4 H(+). Specifically dimethylates two adjacent adenosines (A1518 and A1519) in the loop of a conserved hairpin near the 3'-end of 16S rRNA in the 30S particle. May play a critical role in biogenesis of 30S subunits. The protein is Ribosomal RNA small subunit methyltransferase A of Pectobacterium atrosepticum (strain SCRI 1043 / ATCC BAA-672) (Erwinia carotovora subsp. atroseptica).